A 219-amino-acid polypeptide reads, in one-letter code: Thiamine-phosphate synthase (219 aa).

4-amino-2-methyl-5-(diphosphooxymethyl)pyrimidine is bound by residues 44–48 and Asn79; that span reads QFREK. Residues Asp80 and Asp99 each contribute to the Mg(2+) site. Ser117 is a 4-amino-2-methyl-5-(diphosphooxymethyl)pyrimidine binding site. 143-145 is a 2-[(2R,5Z)-2-carboxy-4-methylthiazol-5(2H)-ylidene]ethyl phosphate binding site; that stretch reads TST. 4-amino-2-methyl-5-(diphosphooxymethyl)pyrimidine is bound at residue Lys146. 2-[(2R,5Z)-2-carboxy-4-methylthiazol-5(2H)-ylidene]ethyl phosphate is bound by residues Gly175 and 195 to 196; that span reads IS.

The protein belongs to the thiamine-phosphate synthase family. Mg(2+) serves as cofactor.

It carries out the reaction 2-[(2R,5Z)-2-carboxy-4-methylthiazol-5(2H)-ylidene]ethyl phosphate + 4-amino-2-methyl-5-(diphosphooxymethyl)pyrimidine + 2 H(+) = thiamine phosphate + CO2 + diphosphate. The catalysed reaction is 2-(2-carboxy-4-methylthiazol-5-yl)ethyl phosphate + 4-amino-2-methyl-5-(diphosphooxymethyl)pyrimidine + 2 H(+) = thiamine phosphate + CO2 + diphosphate. It catalyses the reaction 4-methyl-5-(2-phosphooxyethyl)-thiazole + 4-amino-2-methyl-5-(diphosphooxymethyl)pyrimidine + H(+) = thiamine phosphate + diphosphate. Its pathway is cofactor biosynthesis; thiamine diphosphate biosynthesis; thiamine phosphate from 4-amino-2-methyl-5-diphosphomethylpyrimidine and 4-methyl-5-(2-phosphoethyl)-thiazole: step 1/1. In terms of biological role, condenses 4-methyl-5-(beta-hydroxyethyl)thiazole monophosphate (THZ-P) and 2-methyl-4-amino-5-hydroxymethyl pyrimidine pyrophosphate (HMP-PP) to form thiamine monophosphate (TMP). The protein is Thiamine-phosphate synthase of Bacillus thuringiensis (strain Al Hakam).